A 356-amino-acid polypeptide reads, in one-letter code: UDP-N-acetylglucosamine--N-acetylmuramyl-(pentapeptide) pyrophosphoryl-undecaprenol N-acetylglucosamine transferase (356 aa).

Arg-166, Ser-196, and Gln-290 together coordinate UDP-N-acetyl-alpha-D-glucosamine.

Belongs to the glycosyltransferase 28 family. MurG subfamily.

It is found in the cell membrane. It carries out the reaction Mur2Ac(oyl-L-Ala-gamma-D-Glu-L-Lys-D-Ala-D-Ala)-di-trans,octa-cis-undecaprenyl diphosphate + UDP-N-acetyl-alpha-D-glucosamine = beta-D-GlcNAc-(1-&gt;4)-Mur2Ac(oyl-L-Ala-gamma-D-Glu-L-Lys-D-Ala-D-Ala)-di-trans,octa-cis-undecaprenyl diphosphate + UDP + H(+). It functions in the pathway cell wall biogenesis; peptidoglycan biosynthesis. Functionally, cell wall formation. Catalyzes the transfer of a GlcNAc subunit on undecaprenyl-pyrophosphoryl-MurNAc-pentapeptide (lipid intermediate I) to form undecaprenyl-pyrophosphoryl-MurNAc-(pentapeptide)GlcNAc (lipid intermediate II). The polypeptide is UDP-N-acetylglucosamine--N-acetylmuramyl-(pentapeptide) pyrophosphoryl-undecaprenol N-acetylglucosamine transferase (Staphylococcus aureus (strain MW2)).